A 665-amino-acid chain; its full sequence is Alpha-1,4-glucan:maltose-1-phosphate maltosyltransferase (665 aa).

Alpha-maltose 1-phosphate-binding residues include Lys-255, Gln-315, and Asp-350. The Nucleophile role is filled by Asp-386. Asn-387 lines the alpha-maltose 1-phosphate pocket. Catalysis depends on Glu-415, which acts as the Proton donor. 526–527 (KY) lines the alpha-maltose 1-phosphate pocket.

The protein belongs to the glycosyl hydrolase 13 family. GlgE subfamily. In terms of assembly, homodimer.

It catalyses the reaction alpha-maltose 1-phosphate + [(1-&gt;4)-alpha-D-glucosyl](n) = [(1-&gt;4)-alpha-D-glucosyl](n+2) + phosphate. Its function is as follows. Maltosyltransferase that uses maltose 1-phosphate (M1P) as the sugar donor to elongate linear or branched alpha-(1-&gt;4)-glucans. Is involved in a branched alpha-glucan biosynthetic pathway from trehalose, together with TreS, Mak and GlgB. The protein is Alpha-1,4-glucan:maltose-1-phosphate maltosyltransferase of Myxococcus xanthus (strain DK1622).